The chain runs to 1338 residues: Serine/threonine-protein kinase cek1 (1338 aa).

One can recognise a PAS domain in the interval 28 to 98 (SKDENLQPSI…RAVNCLLKDD (71 aa)). A disordered region spans residues 484-554 (PDFAIGSPMS…GRSSLFSRGR (71 aa)). Positions 491–501 (PMSQDSSNYSS) are enriched in polar residues. Residue Ser525 is modified to Phosphoserine. Positions 541-550 (PASNGRSSLF) are enriched in polar residues. Residues 589–958 (YKILKPISKG…VEEIKAHPFF (370 aa)) form the Protein kinase domain. ATP-binding positions include 595 to 603 (ISKGAFGSV) and Lys618. Asp713 serves as the catalytic Proton acceptor. The residue at position 748 (Ser748) is a Phosphoserine. The segment covering 813-842 (ENSAEDSPTATNTPTSQVDESNIFRSTDSP) has biased composition (polar residues). Disordered stretches follow at residues 813 to 844 (ENSA…SPRV), 1010 to 1035 (KLEE…LRSN), and 1159 to 1185 (SSTM…TSSD). The AGC-kinase C-terminal domain maps to 959 to 1057 (KSVNWDTILE…RNLDFLNKAN (99 aa)). Positions 1159–1174 (SSTMSASQSQSSMHTA) are enriched in low complexity. The residue at position 1211 (Ser1211) is a Phosphoserine.

The protein belongs to the protein kinase superfamily. Ser/Thr protein kinase family.

It carries out the reaction L-seryl-[protein] + ATP = O-phospho-L-seryl-[protein] + ADP + H(+). The enzyme catalyses L-threonyl-[protein] + ATP = O-phospho-L-threonyl-[protein] + ADP + H(+). Functionally, may facilitate the progression of anaphase through direct or indirect interaction with the cut8 protein. The protein is Serine/threonine-protein kinase cek1 (cek1) of Schizosaccharomyces pombe (strain 972 / ATCC 24843) (Fission yeast).